Here is a 47-residue protein sequence, read N- to C-terminus: NADH dehydrogenase [ubiquinone] iron-sulfur protein 2 (47 aa).

Belongs to the complex I 49 kDa subunit family. As to quaternary structure, complex I is composed of about 45 different subunits. This is a component of the iron-sulfur (IP) fragment of the enzyme.

Its subcellular location is the mitochondrion inner membrane. It carries out the reaction a ubiquinone + NADH + 5 H(+)(in) = a ubiquinol + NAD(+) + 4 H(+)(out). In terms of biological role, core subunit of the mitochondrial membrane respiratory chain NADH dehydrogenase (Complex I) that is believed to belong to the minimal assembly required for catalysis. Complex I functions in the transfer of electrons from NADH to the respiratory chain. The immediate electron acceptor for the enzyme is believed to be ubiquinone. Component of the iron-sulfur (IP) fragment of the enzyme. This is NADH dehydrogenase [ubiquinone] iron-sulfur protein 2 (NAD7) from Solanum tuberosum (Potato).